The primary structure comprises 266 residues: uncharacterized protein (266 aa).

This is an uncharacterized protein from Mycobacterium tuberculosis (strain CDC 1551 / Oshkosh).